We begin with the raw amino-acid sequence, 116 residues long: NADH-quinone oxidoreductase subunit A (116 aa).

Helical transmembrane passes span 3–23 (FTLL…VIAL), 61–81 (FAIL…WAVI), and 88–108 (QGLI…AYAW).

Belongs to the complex I subunit 3 family. In terms of assembly, NDH-1 is composed of 14 different subunits. Subunits NuoA, H, J, K, L, M, N constitute the membrane sector of the complex.

The protein localises to the cell inner membrane. It catalyses the reaction a quinone + NADH + 5 H(+)(in) = a quinol + NAD(+) + 4 H(+)(out). Functionally, NDH-1 shuttles electrons from NADH, via FMN and iron-sulfur (Fe-S) centers, to quinones in the respiratory chain. The immediate electron acceptor for the enzyme in this species is believed to be a menaquinone. Couples the redox reaction to proton translocation (for every two electrons transferred, four hydrogen ions are translocated across the cytoplasmic membrane), and thus conserves the redox energy in a proton gradient. The protein is NADH-quinone oxidoreductase subunit A of Bacteroides fragilis (strain ATCC 25285 / DSM 2151 / CCUG 4856 / JCM 11019 / LMG 10263 / NCTC 9343 / Onslow / VPI 2553 / EN-2).